The following is a 187-amino-acid chain: Elongation factor P (187 aa).

The protein belongs to the elongation factor P family.

Its subcellular location is the cytoplasm. It functions in the pathway protein biosynthesis; polypeptide chain elongation. In terms of biological role, involved in peptide bond synthesis. Stimulates efficient translation and peptide-bond synthesis on native or reconstituted 70S ribosomes in vitro. Probably functions indirectly by altering the affinity of the ribosome for aminoacyl-tRNA, thus increasing their reactivity as acceptors for peptidyl transferase. This chain is Elongation factor P, found in Jannaschia sp. (strain CCS1).